The following is a 2017-amino-acid chain: Rootletin (2017 aa).

2 coiled-coil regions span residues 70 to 262 (ATEM…KVTN) and 318 to 444 (ERDL…LETE). The span at 464-483 (SESGVQLSGSERTADASNGS) shows a compositional bias: polar residues. Positions 464 to 518 (SESGVQLSGSERTADASNGSLRGLSGQRTPSPPRRSSPGRGRSPRRGPSPACSDS) are disordered. Positions 499 to 513 (SSPGRGRSPRRGPSP) are enriched in low complexity. Coiled-coil stretches lie at residues 546 to 1058 (QDLL…LAES) and 1091 to 1438 (EMER…GLRS). Disordered stretches follow at residues 1184 to 1226 (LRES…RSAV) and 1443 to 1575 (GLGL…GRLS). Residues serine 1460, serine 1470, serine 1476, serine 1483, serine 1486, serine 1490, and serine 1496 each carry the phosphoserine modification. Residues 1505–1704 (EAVRGALREF…DSEVKAGTLQ (200 aa)) adopt a coiled-coil conformation. Residues 1510-1529 (ALREFLQELRSAQRERDELR) are compositionally biased toward basic and acidic residues. A phosphoserine mark is found at serine 1575 and serine 1660. A disordered region spans residues 1962 to 2017 (RSAQAQTERTLEARERAHRQRVRGLEEQVSTLKGQLQQELRRSSAPFSPPSGPPEK). Residues 1989–1999 (QVSTLKGQLQQ) show a composition bias toward polar residues. The span at 2008 to 2017 (FSPPSGPPEK) shows a compositional bias: pro residues.

Belongs to the rootletin family. In terms of assembly, homomer. Interacts with KLC3, NEK2 and the N-terminus of CEP250. Interacts with CEP44. Interacts with CCDC102B (via N-terminus). In terms of processing, phosphorylated by NEK2 which may regulate its association with centrosomes.

It is found in the cytoplasm. It localises to the cytoskeleton. The protein localises to the microtubule organizing center. The protein resides in the centrosome. Its subcellular location is the centriole. It is found in the cilium basal body. Its function is as follows. Major structural component of the ciliary rootlet, a cytoskeletal-like structure in ciliated cells which originates from the basal body at the proximal end of a cilium and extends proximally toward the cell nucleus. Furthermore, is required for the correct positioning of the cilium basal body relative to the cell nucleus, to allow for ciliogenesis. Contributes to centrosome cohesion before mitosis. The polypeptide is Rootletin (Homo sapiens (Human)).